Here is a 98-residue protein sequence, read N- to C-terminus: uncharacterized protein (98 aa).

The protein belongs to the Rv1128c/1148c/1588c/1702c/1945/3466 family.

This is an uncharacterized protein from Mycobacterium tuberculosis (strain ATCC 25618 / H37Rv).